We begin with the raw amino-acid sequence, 169 residues long: Keratin-associated protein 9-7 (169 aa).

A run of 17 repeats spans residues 8–12 (CCQPT), 13–17 (CCRTT), 32–36 (CCQPS), 37–41 (CCVSS), 46–50 (CCHPT), 51–55 (CCQNT), 56–60 (CCRTT), 61–65 (CCQPT), 75–79 (CCSTP), 80–84 (CCQPI), 85–89 (CCGSS), 90–94 (CCGQT), 100–104 (CCQPS), 139–143 (CCRPA), 144–148 (CCETT), 149–153 (CCRTT), and 163–167 (CCQPA). A 17 X 5 AA repeats of C-C-[VGSREQH]-[SQTPN]-[STPAI] region spans residues 8–167 (CCQPTCCRTT…TCVTSCCQPA (160 aa)).

The protein belongs to the KRTAP type 9 family. In terms of assembly, interacts with hair keratins.

Its function is as follows. In the hair cortex, hair keratin intermediate filaments are embedded in an interfilamentous matrix, consisting of hair keratin-associated proteins (KRTAP), which are essential for the formation of a rigid and resistant hair shaft through their extensive disulfide bond cross-linking with abundant cysteine residues of hair keratins. The matrix proteins include the high-sulfur and high-glycine-tyrosine keratins. This Homo sapiens (Human) protein is Keratin-associated protein 9-7.